The sequence spans 1164 residues: Receptor-like protein kinase BRI1-like 3 (1164 aa).

Residues 1 to 23 (MKQQWQFLILCLLVLFLTVDSRG) form the signal peptide. Over 24 to 772 (RRLLSDDVND…RSHAHPKKQS (749 aa)) the chain is Extracellular. The N-linked (GlcNAc...) asparagine glycan is linked to asparagine 32. Positions 65–72 (CTWRGVSC) match the Cys pair 1 motif. 20 LRR repeats span residues 77-98 (RVIGLDLRNGGLTGTLNLNNLT), 102-123 (NLRSLYLQGNNFSSGDSSSSSG), 125-146 (SLEVLDLSSNSLTDSSIVDYVF), 151-173 (NLVSVNFSHNKLAGKLKSSPSAS), 176-197 (RITTVDLSNNRFSDEIPETFIA), 202-224 (SLKHLDLSGNNVTGDFSRLSFGL), 227-248 (NLTVFSLSQNSISGDRFPVSLS), 252-274 (LLETLNLSRNSLIGKIPGDDYWG), 278-300 (NLRQLSLAHNLYSGEIPPELSLL), 303-325 (TLEVLDLSGNSLTGQLPQSFTSC), 327-347 (SLQSLNLGNNKLSGDFLSTVV), 352-375 (RITNLYLPFNNISGSVPISLTNCS), 376-397 (NLRVLDLSSNEFTGEVPSGFCS), 403-424 (VLEKLLIANNYLSGTVPVELGK), 427-448 (SLKTIDLSFNALTGLIPKEIWT), 451-473 (KLSDLVMWANNLTGGIPESICVD), 476-498 (NLETLILNNNLLTGSLPESISKC), 500-523 (NMLWISLSSNLLTGEIPVGIGKLE), 524-546 (KLAILQLGNNSLTGNIPSELGNC), and 548-570 (NLIWLDLNSNNLTGNLPGELASQ). 2 N-linked (GlcNAc...) asparagine glycosylation sites follow: asparagine 96 and asparagine 112. A glycan (N-linked (GlcNAc...) asparagine) is linked at asparagine 156. Residues asparagine 212, asparagine 227, and asparagine 257 are each glycosylated (N-linked (GlcNAc...) asparagine). 2 N-linked (GlcNAc...) asparagine glycosylation sites follow: asparagine 362 and asparagine 373. The N-linked (GlcNAc...) asparagine glycan is linked to asparagine 461. Residues asparagine 532, asparagine 558, and asparagine 638 are each glycosylated (N-linked (GlcNAc...) asparagine). LRR repeat units lie at residues 640 to 662 (SMIYLDLSYNAVSGSIPLGYGAM), 664 to 686 (YLQVLNLGHNLLTGTIPDSFGGL), 688 to 711 (AIGVLDLSHNDLQGFLPGSLGGLS), and 712 to 734 (FLSDLDVSNNNLTGPIPFGGQLT). Residues asparagine 722 and asparagine 743 are each glycosylated (N-linked (GlcNAc...) asparagine). A Cys pair 2 motif is present at residues 748 to 755 (CGVPLPPC). A helical membrane pass occupies residues 773–793 (IATGMSAGIVFSFMCIVMLIM). Residues 794-1164 (ALYRARKVQK…LVEESRDKEP (371 aa)) are Cytoplasmic-facing. A phosphothreonine mark is found at threonine 847 and threonine 855. The Protein kinase domain occupies 858–1136 (FSADSMIGSG…QVMTMFKELV (279 aa)). ATP-binding positions include 864 to 872 (IGSGGFGDV) and lysine 886. Tyrosine 931 is modified (phosphotyrosine). Catalysis depends on aspartate 985, which acts as the Proton acceptor. Serine 1020 carries the phosphoserine modification. Tyrosine 1028 carries the post-translational modification Phosphotyrosine.

This sequence belongs to the protein kinase superfamily. Ser/Thr protein kinase family. In terms of processing, autophosphorylated on Tyr and Thr residues. As to expression, predominantly expressed in vascular tissues. Expressed only during postembryonic development with a very discrete pattern of expression, preferentially in the two protophloem cell files at the elongation zone of the root. The expression in these two cell files attenuates as the phloem cells differentiate in the upper root. In cotyledons and leaves, it is expressed in phloem cells, starting at the cotyledons and shoot apex, moving toward the basal part of the leaves, where the expression is weak. Expressed in the secondary and tertiary veins and in the upper part of the cotyledons and leaves. Weakly or not expressed in the inflorescence stems. Has some complementary expression with BRL1.

The protein resides in the cell membrane. The catalysed reaction is L-seryl-[protein] + ATP = O-phospho-L-seryl-[protein] + ADP + H(+). It catalyses the reaction L-threonyl-[protein] + ATP = O-phospho-L-threonyl-[protein] + ADP + H(+). It carries out the reaction L-tyrosyl-[protein] + ATP = O-phospho-L-tyrosyl-[protein] + ADP + H(+). Receptor with a dual specificity kinase activity acting on both serine/threonine- and tyrosine-containing substrates. Binds brassinolide. Regulates, in response to brassinosteroid binding, a signaling cascade involved in plant development. May be involved in cell growth and vascular differentiation. In Arabidopsis thaliana (Mouse-ear cress), this protein is Receptor-like protein kinase BRI1-like 3 (BRL3).